The primary structure comprises 553 residues: MRYARHASRYSLFTLAVSAALLPGAGWAANGDLAGARKPPSVACSWNREAALSYEERRLDTPLPFSGANVVTHDQTPLAERIVKGAGFDGFEPAFAKRLCAADGRTPVTSYAKALKLVTEEGRALWRAAVDRAQGRRAIPAGALPASDDRMLYWTRLYMTRTLRQWAPSFHLGKAQAQALQWRFERASRGQLDIDLPRRYAADGSRYRRMIISGFDVFTLGTPGTANTGLRNGNPSGATALALDGREFRLADGSLLRIEAYLLPVSYDPFNRGMQEDTLGPWFRPGPRRVDASITISQGGANQFWLEAWNGRFHGSSAGNDGIVYCPADSALPNYVLPLGSVTNPGTAPISLRGSGCNINPPRRWLGYDSASRWRQNLPAQFSKASLPVRQLLAADTWRGIERPPGATSQAAEGFDVTWHTNYDFFPDCANPRTENVPTNGVMNAMPDPSLVLPPNRRICARNGGGGDYLSNESAYRNTVLRDAFRLEIPAGHIHVPVMNNYYTGVPASGGGARNDNAISDARYEAYRSAIVAQTRALLVGVGNALAQGAQAD.

The signal sequence occupies residues 1–28; the sequence is MRYARHASRYSLFTLAVSAALLPGAGWA.

This is an uncharacterized protein from Pseudomonas aeruginosa (strain ATCC 15692 / DSM 22644 / CIP 104116 / JCM 14847 / LMG 12228 / 1C / PRS 101 / PAO1).